The chain runs to 177 residues: Large ribosomal subunit protein bL9 (177 aa).

The tract at residues 151–177 (VEEEPAEEVEAPAETEVAEDAEEATEA) is disordered.

It belongs to the bacterial ribosomal protein bL9 family.

In terms of biological role, binds to the 23S rRNA. The sequence is that of Large ribosomal subunit protein bL9 from Maridesulfovibrio salexigens (strain ATCC 14822 / DSM 2638 / NCIMB 8403 / VKM B-1763) (Desulfovibrio salexigens).